An 81-amino-acid chain; its full sequence is Trefoil factor 3 (81 aa).

An N-terminal signal peptide occupies residues M1–G23. Positions N31–L74 constitute a P-type domain. 3 disulfides stabilise this stretch: C33–C59, C43–C58, and C53–C70.

Monomer. Homodimer; disulfide-linked.

It is found in the secreted. Its subcellular location is the extracellular space. It localises to the extracellular matrix. The protein localises to the cytoplasm. In terms of biological role, involved in the maintenance and repair of the intestinal mucosa. Promotes the mobility of epithelial cells in healing processes (motogen). The protein is Trefoil factor 3 (TFF3) of Bos taurus (Bovine).